Consider the following 425-residue polypeptide: Riboflavin biosynthesis protein RibBA (425 aa).

A DHBP synthase region spans residues 1 to 204 (MTRLDSVERA…IADLIEWRRK (204 aa)). D-ribulose 5-phosphate contacts are provided by residues 28 to 29 (RE), Asp33, 141 to 145 (RPGHT), and Glu165. Residue Glu29 coordinates Mg(2+). Position 144 (His144) interacts with Mg(2+). The interval 205 to 425 (HEKHIERVAE…HLPGEFGGAL (221 aa)) is GTP cyclohydrolase II. 259–263 (RVHSE) serves as a coordination point for GTP. 3 residues coordinate Zn(2+): Cys264, Cys275, and Cys277. Residues Gln280, 303-305 (EGR), and Thr325 each bind GTP. Asp337 acts as the Proton acceptor; for GTP cyclohydrolase activity in catalysis. Arg339 functions as the Nucleophile; for GTP cyclohydrolase activity in the catalytic mechanism. Residues Thr360 and Lys365 each coordinate GTP.

The protein in the N-terminal section; belongs to the DHBP synthase family. In the C-terminal section; belongs to the GTP cyclohydrolase II family. The cofactor is Mg(2+). Mn(2+) serves as cofactor. It depends on Zn(2+) as a cofactor.

The enzyme catalyses D-ribulose 5-phosphate = (2S)-2-hydroxy-3-oxobutyl phosphate + formate + H(+). It catalyses the reaction GTP + 4 H2O = 2,5-diamino-6-hydroxy-4-(5-phosphoribosylamino)-pyrimidine + formate + 2 phosphate + 3 H(+). It participates in cofactor biosynthesis; riboflavin biosynthesis; 2-hydroxy-3-oxobutyl phosphate from D-ribulose 5-phosphate: step 1/1. The protein operates within cofactor biosynthesis; riboflavin biosynthesis; 5-amino-6-(D-ribitylamino)uracil from GTP: step 1/4. Functionally, catalyzes the conversion of D-ribulose 5-phosphate to formate and 3,4-dihydroxy-2-butanone 4-phosphate. Catalyzes the conversion of GTP to 2,5-diamino-6-ribosylamino-4(3H)-pyrimidinone 5'-phosphate (DARP), formate and pyrophosphate. This Mycobacterium ulcerans (strain Agy99) protein is Riboflavin biosynthesis protein RibBA.